The following is a 159-amino-acid chain: NADH-quinone oxidoreductase subunit I (159 aa).

2 4Fe-4S ferredoxin-type domains span residues 51–80 and 90–119; these read RRYE…IEAD and TRYD…EGPN. Residues Cys-60, Cys-63, Cys-66, Cys-70, Cys-99, Cys-102, Cys-105, and Cys-109 each coordinate [4Fe-4S] cluster.

It belongs to the complex I 23 kDa subunit family. As to quaternary structure, NDH-1 is composed of 14 different subunits. Subunits NuoA, H, J, K, L, M, N constitute the membrane sector of the complex. Requires [4Fe-4S] cluster as cofactor.

The protein localises to the cell inner membrane. The enzyme catalyses a quinone + NADH + 5 H(+)(in) = a quinol + NAD(+) + 4 H(+)(out). NDH-1 shuttles electrons from NADH, via FMN and iron-sulfur (Fe-S) centers, to quinones in the respiratory chain. The immediate electron acceptor for the enzyme in this species is believed to be ubiquinone. Couples the redox reaction to proton translocation (for every two electrons transferred, four hydrogen ions are translocated across the cytoplasmic membrane), and thus conserves the redox energy in a proton gradient. In Rickettsia rickettsii (strain Sheila Smith), this protein is NADH-quinone oxidoreductase subunit I.